Consider the following 70-residue polypeptide: Large ribosomal subunit protein bL31 (70 aa).

Residues Cys-16, Cys-18, Cys-37, and Cys-40 each coordinate Zn(2+).

This sequence belongs to the bacterial ribosomal protein bL31 family. Type A subfamily. In terms of assembly, part of the 50S ribosomal subunit. It depends on Zn(2+) as a cofactor.

In terms of biological role, binds the 23S rRNA. This Histophilus somni (strain 2336) (Haemophilus somnus) protein is Large ribosomal subunit protein bL31.